Reading from the N-terminus, the 69-residue chain is Neuropeptide-like protein 30 (69 aa).

Positions 1–22 (MISTSSILILVVLLACFMAASA) are cleaved as a signal peptide. Tyrosine amide is present on residues Tyr29, Tyr39, Tyr46, and Tyr53. 2 positions are modified to tryptophan amide: Trp58 and Trp67.

It belongs to the YARP (YGGW-amide related peptide) family. Expressed in hypoderm.

Its subcellular location is the secreted. Its function is as follows. May have antimicrobial activity. May play a role in response to fungal infection. The polypeptide is Neuropeptide-like protein 30 (nlp-30) (Caenorhabditis elegans).